A 691-amino-acid polypeptide reads, in one-letter code: MEALIPVINKLQDVFNTVGADIIQLPQIAVVGTQSSGKSSVLESLVGRDLLPRGTGIVTRRPLILQLVHVDPEDRRKTSEENGVDGEEWGKFLHTKNKIYTDFDEIRQEIENETERVSGNNKGISDEPIHLKIFSPHVVNLTLVDLPGITKVPVGDQPKDIELQIRELILKYISNPNSIILAVTAANTDMATSEALKVAREVDPDGRRTLAVVTKLDLMDAGTDAMDVLMGRVIPVKLGLIGVVNRSQLDINNKKSVADSIRDEHGFLQKKYPSLANRNGTKYLARTLNRLLMHHIRDCLPELKTRINVLSAQYQSLLSSYGEPVEDMSATLLQLITKFATEYCNTIEGTAKYIETAELCGGARICYIFHETFGRTLESVDPLGGLTTIDVLTAIRNATGPRPALFVPEVSFELLVKRQVKRLEEPSLRCVELVHEEMQRIIQHCSNYSTQELLRFPKLHDAIVEVVTSLLRKRLPVTNEMVHNLVAIELAYINTKHPDFADACGLMNNNIEEQRRNRMRELPTSVPRDKMAGGAQAEQEGGTGTWRGMLKKGDEGQGEEKTKLQSSIPASPQKGHAVNLLDVPVPVARKLSAREQRDCEVIERLIKSYFLIVRKNIQDSVPKAVMHFLVNHVKDSLQSELVGQLYKPALLDDLLTESEDMAQRRNEAADMLKALQKASQVIAEIRETHLW.

The Dynamin-type G domain occupies 22 to 301 (IIQLPQIAVV…LMHHIRDCLP (280 aa)). The tract at residues 32-39 (GTQSSGKS) is G1 motif. Residue 32–40 (GTQSSGKSS) coordinates GTP. The tract at residues 58–60 (VTR) is G2 motif. The interval 145–148 (DLPG) is G3 motif. Positions 214–217 (TKLD) are G4 motif. Residues 214–220 (TKLDLMD) and 245–248 (NRSQ) each bind GTP. Positions 244-247 (VNRS) are G5 motif. Residues 343 to 488 (YCNTIEGTAK…NEMVHNLVAI (146 aa)) are middle domain. Composition is skewed to basic and acidic residues over residues 522–531 (LPTSVPRDKM) and 551–563 (KKGD…EKTK). The disordered stretch occupies residues 522 to 573 (LPTSVPRDKMAGGAQAEQEGGTGTWRGMLKKGDEGQGEEKTKLQSSIPASPQ). The GED domain occupies 599–690 (CEVIERLIKS…VIAEIRETHL (92 aa)). The interval 609 to 623 (YFLIVRKNIQDSVPK) is important for homodimerization.

It belongs to the TRAFAC class dynamin-like GTPase superfamily. Dynamin/Fzo/YdjA family. In terms of assembly, homotetramer; dimerizes through the N-terminal GTP-middle region of one molecule binding to the GED domain of another DNM1L molecule. Oligomerizes in a GTP-dependent manner to form membrane-associated tubules with a spiral pattern.

Its subcellular location is the cytoplasm. It localises to the cytosol. The protein resides in the golgi apparatus. It is found in the endomembrane system. The protein localises to the mitochondrion outer membrane. Its subcellular location is the peroxisome. It localises to the membrane. The protein resides in the clathrin-coated pit. It is found in the cytoplasmic vesicle. The protein localises to the secretory vesicle. Its subcellular location is the synaptic vesicle membrane. It carries out the reaction GTP + H2O = GDP + phosphate + H(+). In terms of biological role, functions in mitochondrial and peroxisomal division. Mediates membrane fission through oligomerization into membrane-associated tubular structures that wrap around the scission site to constrict and sever the mitochondrial membrane through a GTP hydrolysis-dependent mechanism. The specific recruitment at scission sites is mediated by membrane receptors like MFF, MIEF1 and MIEF2 for mitochondrial membranes. While the recruitment by the membrane receptors is GTP-dependent, the following hydrolysis of GTP induces the dissociation from the receptors and allows DNM1L filaments to curl into closed rings that are probably sufficient to sever a double membrane. May play a role in the circadian control of mitochondrial ATP production. The chain is Dynamin-1-like protein from Danio rerio (Zebrafish).